Here is a 439-residue protein sequence, read N- to C-terminus: Amino-acid acetyltransferase (439 aa).

Residues 289–429 (EDIRIATVQD…DHYNYQRRSK (141 aa)) form the N-acetyltransferase domain.

Belongs to the acetyltransferase family. ArgA subfamily.

It is found in the cytoplasm. It carries out the reaction L-glutamate + acetyl-CoA = N-acetyl-L-glutamate + CoA + H(+). It functions in the pathway amino-acid biosynthesis; L-arginine biosynthesis; N(2)-acetyl-L-ornithine from L-glutamate: step 1/4. The sequence is that of Amino-acid acetyltransferase from Mannheimia succiniciproducens (strain KCTC 0769BP / MBEL55E).